The chain runs to 98 residues: Protein FAM24A (98 aa).

A signal peptide spans methionine 1 to cysteine 29.

This sequence belongs to the FAM24 family.

It is found in the secreted. In Mus musculus (Mouse), this protein is Protein FAM24A (Fam24a).